The primary structure comprises 427 residues: Glutamate-1-semialdehyde 2,1-aminomutase (427 aa).

Lys-264 is subject to N6-(pyridoxal phosphate)lysine.

It belongs to the class-III pyridoxal-phosphate-dependent aminotransferase family. HemL subfamily. In terms of assembly, homodimer. The cofactor is pyridoxal 5'-phosphate.

The protein localises to the cytoplasm. It catalyses the reaction (S)-4-amino-5-oxopentanoate = 5-aminolevulinate. It functions in the pathway porphyrin-containing compound metabolism; protoporphyrin-IX biosynthesis; 5-aminolevulinate from L-glutamyl-tRNA(Glu): step 2/2. The protein is Glutamate-1-semialdehyde 2,1-aminomutase of Clostridium botulinum (strain Alaska E43 / Type E3).